The following is a 114-amino-acid chain: Large ribosomal subunit protein bL19 (114 aa).

Belongs to the bacterial ribosomal protein bL19 family.

Functionally, this protein is located at the 30S-50S ribosomal subunit interface and may play a role in the structure and function of the aminoacyl-tRNA binding site. This is Large ribosomal subunit protein bL19 from Lactococcus lactis subsp. cremoris (strain MG1363).